A 254-amino-acid polypeptide reads, in one-letter code: Tumor necrosis factor ligand superfamily member 9 (254 aa).

Residues 1 to 28 are Cytoplasmic-facing; it reads MEYASDASLDPEAPWPPAPRARACRVLP. The helical; Signal-anchor for type II membrane protein transmembrane segment at 29–49 threads the bilayer; sequence WALVAGLLLLLLLAAACAVFL. Over 50–254 the chain is Extracellular; sequence ACPWAVSGAR…PAGLPSPRSE (205 aa). Positions 91 to 240 constitute a THD domain; sequence MFAQLVAQNV…GATVLGLFRV (150 aa).

The protein belongs to the tumor necrosis factor family. In terms of assembly, homotrimer. As to expression, expressed in brain, placenta, lung, skeletal muscle and kidney.

It is found in the membrane. Its function is as follows. Cytokine that binds to TNFRSF9. Induces the proliferation of activated peripheral blood T-cells. May have a role in activation-induced cell death (AICD). May play a role in cognate interactions between T-cells and B-cells/macrophages. This is Tumor necrosis factor ligand superfamily member 9 (TNFSF9) from Homo sapiens (Human).